A 264-amino-acid chain; its full sequence is Short chain dehydrogenase/reductase dmxR18 (264 aa).

NADP(+) contacts are provided by I24, D70, N97, and R130. Catalysis depends on proton donor residues S146 and S147. NADP(+) contacts are provided by Y161, K165, and T196. Y161 acts as the Proton acceptor in catalysis. K165 functions as the Lowers pKa of active site Tyr in the catalytic mechanism.

Belongs to the short-chain dehydrogenases/reductases (SDR) family.

It catalyses the reaction 3,8,9,10-tetrahydroxy-6-methyl-1,4-dihydroanthracen-1-one + NADPH + H(+) = (3R)-3,8,9,10-tetrahydroxy-6-methyl-1,2,3,4-tetrahydroanthracen-1-one + NADP(+). It functions in the pathway secondary metabolite biosynthesis. In terms of biological role, short chain dehydrogenase/reductase; part of the gene cluster that mediates the biosynthesis of the dimeric xanthones cryptosporioptides. The pathway begins with the synthesis of atrochrysone thioester by the polyketide synthase dmx-nrPKS. The atrochrysone carboxyl ACP thioesterase dmxR1 then breaks the thioester bond and releases the atrochrysone carboxylic acid from dmx-nrPKS. Atrochrysone carboxylic acid is decarboxylated by the decarboxylase dmxR15, and oxidized by the anthrone oxygenase dmxR16 to yield emodin. Emodin is then reduced to emodin hydroquinone by the oxidoreductase dmxR7. A-ring reduction by the short chain dehydrogenase dmxR18, dehydration by the scytalone dehydratase-like protein dmxR17 and probable spontaneous re-oxidation, results in overall deoxygenation to chrysophanol. Baeyer-Villiger oxidation by the Baeyer-Villiger monooxygenase (BVMO) dmxR6 then yields monodictylactone in equilibrium with monodictyphenone. In the case of the cryptosporioptides biosynthesis, monodictylactone is reduced at C-12 to an alcohol (by the short chain dehydrogenases dmxR12 or dmxR8) and hydroxylated at C-5 by dmxR9, yielding the electron-rich aromatic which could eliminate H(2)O to form the ortho-quinonemethide, followed by tautomerisation to paraquinone and complete the formal reduction to produce the 10-methylgroup. Conjugate addition of C-4a-OH to the resulting paraquinone by the monooxygenase dmxR10 then gives cyclohexadienone, which is then reduced at C-5 by the short chain dehydrogenase dmxR3 to give the dihydroxanthone. The 6,7-epoxide in the cryptosporioptides could be introduced by the cytochrome P450 monooxygenase dmxL3. The highly reducing PKS dmxL2 manufactures butyrate, which is further carboxylated by dmxL1 to form ethylmalonate. It is not yet clear whether the carboxylation occurs while the butyrate is attached to the ACP of dmxL2, but this unusual fungal metabolite could then be esterified to O-5 by the O-acetyltransferase dmxR13. Finally, dimerization performed by dmxR5 gives the observed dimers cryptosporioptides A, B and C as the final products of the pathway. This chain is Short chain dehydrogenase/reductase dmxR18, found in Cryptosporiopsis sp. (strain 8999).